Reading from the N-terminus, the 331-residue chain is Elongation factor Ts, mitochondrial (331 aa).

A disordered region spans residues 254 to 295 (SPLTVGEMPEVREEEGEKKDGDKQDEEERSTDSDEDETQMLR). Positions 262-275 (PEVREEEGEKKDGD) are enriched in basic and acidic residues. Residues 276–291 (KQDEEERSTDSDEDET) are compositionally biased toward acidic residues.

Belongs to the EF-Ts family.

The protein resides in the mitochondrion. Associates with the EF-Tu.GDP complex and induces the exchange of GDP to GTP. It remains bound to the aminoacyl-tRNA.EF-Tu.GTP complex up to the GTP hydrolysis stage on the ribosome. This is Elongation factor Ts, mitochondrial from Branchiostoma floridae (Florida lancelet).